Here is a 151-residue protein sequence, read N- to C-terminus: Lipoprotein signal peptidase (151 aa).

Helical transmembrane passes span 3–23 (LYII…GWIV), 59–79 (WFFY…FYTS), and 85–107 (LYRI…RLHL). Catalysis depends on residues Asp112 and Asp128. A helical membrane pass occupies residues 123 to 143 (IFNVADTALTCGVICVFIAIL).

It belongs to the peptidase A8 family.

The protein resides in the cell membrane. It catalyses the reaction Release of signal peptides from bacterial membrane prolipoproteins. Hydrolyzes -Xaa-Yaa-Zaa-|-(S,diacylglyceryl)Cys-, in which Xaa is hydrophobic (preferably Leu), and Yaa (Ala or Ser) and Zaa (Gly or Ala) have small, neutral side chains.. It functions in the pathway protein modification; lipoprotein biosynthesis (signal peptide cleavage). Its function is as follows. This protein specifically catalyzes the removal of signal peptides from prolipoproteins. This chain is Lipoprotein signal peptidase, found in Latilactobacillus sakei subsp. sakei (strain 23K) (Lactobacillus sakei subsp. sakei).